Reading from the N-terminus, the 573-residue chain is Urease subunit alpha (573 aa).

Residues glycine 136–phenylalanine 573 enclose the Urease domain. Ni(2+) contacts are provided by histidine 141, histidine 143, and lysine 224. Lysine 224 is subject to N6-carboxylysine. A substrate-binding site is contributed by histidine 226. Histidine 253 and histidine 279 together coordinate Ni(2+). Residue histidine 327 is the Proton donor of the active site. Aspartate 367 is a binding site for Ni(2+).

Belongs to the metallo-dependent hydrolases superfamily. Urease alpha subunit family. In terms of assembly, heterotrimer of UreA (gamma), UreB (beta) and UreC (alpha) subunits. Three heterotrimers associate to form the active enzyme. The cofactor is Ni cation. Carboxylation allows a single lysine to coordinate two nickel ions.

It is found in the cytoplasm. It carries out the reaction urea + 2 H2O + H(+) = hydrogencarbonate + 2 NH4(+). It participates in nitrogen metabolism; urea degradation; CO(2) and NH(3) from urea (urease route): step 1/1. This Mycolicibacterium vanbaalenii (strain DSM 7251 / JCM 13017 / BCRC 16820 / KCTC 9966 / NRRL B-24157 / PYR-1) (Mycobacterium vanbaalenii) protein is Urease subunit alpha.